Consider the following 863-residue polypeptide: Scm-like with four MBT domains protein 1 (863 aa).

MBT repeat units follow at residues Phe20–Pro120, Ser128–Pro232, Ala242–Pro346, and Phe354–Pro451. Residues Lys638–Pro773 form a disordered region. Residues Lys660 to Ser679 are compositionally biased toward basic residues. A compositionally biased stretch (polar residues) spans Ser680–Pro691. 2 stretches are compositionally biased toward acidic residues: residues Gly696–Leu710 and Gln718–Glu727. Low complexity predominate over residues Ser734–Pro744. Ser764 and Ser772 each carry phosphoserine. Residues Trp793–Phe861 enclose the SAM domain.

As to quaternary structure, interacts with MYOD1. Component of the SLC (SFMBT1-LSD1-CoREST) corepressor complex, which also contains KDM1A/LSD1 and RCOR1/CoREST. Interacts with KDM1A/LSD1 and RCOR1/CoREST. Interacts with MYOD1. Interacts with L3MBTL3. As to expression, highly expressed in the testis, low expression is detected in brain, kidney, heart and lung. Highly expressed in germ cells, where it associates with the synaptic regions of meiotic chromosomes in pachytene stage spermatocytes.

The protein resides in the nucleus. Histone-binding protein, which is part of various corepressor complexes. Mediates the recruitment of corepressor complexes to target genes, followed by chromatin compaction and repression of transcription. Plays a role during myogenesis: required for the maintenance of undifferentiated states of myogenic progenitor cells via interaction with MYOD1. Interaction with MYOD1 leads to the recruitment of associated corepressors and silencing of MYOD1 target genes. Part of the SLC complex in germ cells, where it may play a role during spermatogenesis. The chain is Scm-like with four MBT domains protein 1 (Sfmbt1) from Mus musculus (Mouse).